Reading from the N-terminus, the 504-residue chain is D-alanine--D-alanyl carrier protein ligase (504 aa).

Residue 152-153 (TS) coordinates ATP. D-alanine is bound at residue aspartate 197. Position 292 to 297 (292 to 297 (NTYGPT)) interacts with ATP. Valine 301 provides a ligand contact to D-alanine. ATP contacts are provided by residues aspartate 383, 394–397 (YNGR), and lysine 492. Lysine 492 serves as a coordination point for D-alanine.

Belongs to the ATP-dependent AMP-binding enzyme family. DltA subfamily.

The protein resides in the cytoplasm. The enzyme catalyses holo-[D-alanyl-carrier protein] + D-alanine + ATP = D-alanyl-[D-alanyl-carrier protein] + AMP + diphosphate. Its pathway is cell wall biogenesis; lipoteichoic acid biosynthesis. In terms of biological role, catalyzes the first step in the D-alanylation of lipoteichoic acid (LTA), the activation of D-alanine and its transfer onto the D-alanyl carrier protein (Dcp) DltC. In an ATP-dependent two-step reaction, forms a high energy D-alanyl-AMP intermediate, followed by transfer of the D-alanyl residue as a thiol ester to the phosphopantheinyl prosthetic group of the Dcp. D-alanylation of LTA plays an important role in modulating the properties of the cell wall in Gram-positive bacteria, influencing the net charge of the cell wall. This Bacillus cytotoxicus (strain DSM 22905 / CIP 110041 / 391-98 / NVH 391-98) protein is D-alanine--D-alanyl carrier protein ligase.